The following is a 204-amino-acid chain: Guanylate kinase (204 aa).

Residues 4–182 (GLLYVISAPS…ALNQLRAIVQ (179 aa)) enclose the Guanylate kinase-like domain. Residue 11–18 (APSGAGKT) coordinates ATP.

The protein belongs to the guanylate kinase family.

It is found in the cytoplasm. It carries out the reaction GMP + ATP = GDP + ADP. Essential for recycling GMP and indirectly, cGMP. In Methylococcus capsulatus (strain ATCC 33009 / NCIMB 11132 / Bath), this protein is Guanylate kinase.